Reading from the N-terminus, the 407-residue chain is Peptidase T (407 aa).

Residue histidine 82 participates in Zn(2+) binding. The active site involves aspartate 84. Residue aspartate 143 coordinates Zn(2+). Glutamate 177 acts as the Proton acceptor in catalysis. Positions 178, 200, and 382 each coordinate Zn(2+).

It belongs to the peptidase M20B family. Requires Zn(2+) as cofactor.

It is found in the cytoplasm. The enzyme catalyses Release of the N-terminal residue from a tripeptide.. In terms of biological role, cleaves the N-terminal amino acid of tripeptides. The protein is Peptidase T of Streptococcus pyogenes serotype M6 (strain ATCC BAA-946 / MGAS10394).